Consider the following 179-residue polypeptide: Inosine/xanthosine triphosphatase (179 aa).

A Mg(2+)-binding site is contributed by E71. 71–72 (EA) contributes to the substrate binding site.

The protein belongs to the YjjX NTPase family. In terms of assembly, homodimer. Requires Mg(2+) as cofactor. It depends on Mn(2+) as a cofactor.

The catalysed reaction is XTP + H2O = XDP + phosphate + H(+). It carries out the reaction ITP + H2O = IDP + phosphate + H(+). Its function is as follows. Phosphatase that hydrolyzes non-canonical purine nucleotides such as XTP and ITP to their respective diphosphate derivatives. Probably excludes non-canonical purines from DNA/RNA precursor pool, thus preventing their incorporation into DNA/RNA and avoiding chromosomal lesions. The chain is Inosine/xanthosine triphosphatase from Shewanella sp. (strain ANA-3).